Here is a 2541-residue protein sequence, read N- to C-terminus: Talin-1 (2541 aa).

The 318-residue stretch at 86–403 folds into the FERM domain; it reads RPLKIRMLDG…GYIDIILKKK (318 aa). Thr-167 is modified (phosphothreonine). Residues 280-435 are interaction with LAYN; it reads FQAHKNCGQM…PKKSTVLQQQ (156 aa). Phosphoserine is present on residues Ser-405, Ser-425, Ser-446, Ser-620, and Ser-729. The segment at 482-655 is helical bundle R1; it reads RGHMPPLTSA…QASGELLQQI (174 aa). A helical bundle R2 region spans residues 656–786; that stretch reads GESDTDPHFQ…ALNELLQHVK (131 aa). Residues 787–911 form a helical bundle R3 region; that stretch reads AHATGAGPAG…NAAAQNAIKK (125 aa). A helical bundle R4 region spans residues 913 to 1044; sequence LVQRLEHAAK…RTAAQKAQEA (132 aa). At Ser-1021 the chain carries Phosphoserine. Residues 1046–1206 are helical bundle R5; that stretch reads GPLEMDSALS…NRCVSCLPGQ (161 aa). A Phosphotyrosine modification is found at Tyr-1116. Thr-1142 is modified (phosphothreonine). Phosphoserine is present on residues Ser-1201 and Ser-1225. The segment at 1207 to 1357 is helical bundle R6; it reads RDVDNALRAV…QLITMCTQQA (151 aa). At Thr-1263 the chain carries Phosphothreonine. A phosphoserine mark is found at Ser-1323 and Ser-1328. An interaction with SYNM region spans residues 1327 to 1948; it reads ASPNLKSQLA…CSPSDVYTKK (622 aa). A helical bundle R7A; Interaction with KANK1 region spans residues 1358–1453; the sequence is PGQKECDNAL…AYLVGVSDPN (96 aa). Residues 1359–1659 form an interaction with VCL and F-actin region; it reads GQKECDNALR…SMRDKAPGQL (301 aa). The helical bundle R8 stretch occupies residues 1461–1580; it reads LVEPTQFARA…NLSAFASNPE (120 aa). Lys-1544 carries the post-translational modification N6-acetyllysine. Positions 1581–1653 are helical bundle R7B; Interaction with KANK1; the sequence is FSSVPAQISP…IKKLITSMRD (73 aa). A helical bundle R9 region spans residues 1655–1822; it reads APGQLECETA…TLNEAASAAG (168 aa). The segment at 1823–1973 is helical bundle R10; it reads VVGGMVDSIT…VLAALQAGNR (151 aa). Ser-1849 is modified (phosphoserine). Thr-1855 bears the Phosphothreonine mark. Ser-1878 bears the Phosphoserine mark. Residues 1974–2140 form a helical bundle R11 region; sequence GTQACITAAS…TVKAVEDEAT (167 aa). An N6-acetyllysine modification is found at Lys-2031. The residue at position 2040 (Ser-2040) is a Phosphoserine. Lys-2115 bears the N6-acetyllysine mark. The segment at 2141–2294 is helical bundle R12; the sequence is KGTRALEATT…QAAEAMKGTE (154 aa). The 241-residue stretch at 2293–2533 folds into the I/LWEQ domain; the sequence is TEWVDPEDPT…QIRQQQYKFL (241 aa). The interval 2300–2482 is helical bundle R13; sequence DPTVIAENEL…AAQKAAAFED (183 aa).

As to quaternary structure, part of a complex composed of THSD1, PTK2/FAK1, TLN1 and VCL. Interacts with THSD1; this promotes interaction with PTK2/FAK1 and VCL. Interacts with NRAP and LAYN. Interacts with SYNM. Interacts with ITGB1; the interaction is prevented by competitive binding of ITGB1BP1. Binds with high affinity to VCL and with low affinity to integrins. Interacts with APBB1IP; this inhibits VCL binding. Interacts with PTK2/FAK1. Interacts with PIP5K1C. Interacts with F-actin. Interacts with SVEP1. Interacts (via R7 domain) with KANK1 or KANK2 (via KN motif); this interaction likely initiates the assembly of cortical microtubule stabilization complexes (CMSCs) at the vicinity of focal adhesions.

The protein localises to the cell projection. Its subcellular location is the ruffle membrane. It localises to the cytoplasm. The protein resides in the cytoskeleton. It is found in the cell surface. The protein localises to the cell junction. Its subcellular location is the focal adhesion. In terms of biological role, high molecular weight cytoskeletal protein concentrated at regions of cell-matrix and cell-cell contacts. Involved in connections of major cytoskeletal structures to the plasma membrane. With KANK1 co-organize the assembly of cortical microtubule stabilizing complexes (CMSCs) positioned to control microtubule-actin crosstalk at focal adhesions (FAs) rims. In Mus musculus (Mouse), this protein is Talin-1 (Tln1).